A 324-amino-acid polypeptide reads, in one-letter code: Adenine deaminase (324 aa).

Zn(2+) is bound by residues H11, H13, and H189. E192 serves as the catalytic Proton donor. D270 lines the Zn(2+) pocket. D271 contributes to the substrate binding site.

This sequence belongs to the metallo-dependent hydrolases superfamily. Adenosine and AMP deaminases family. Adenine deaminase type 2 subfamily. Requires Zn(2+) as cofactor.

It catalyses the reaction adenine + H2O + H(+) = hypoxanthine + NH4(+). Functionally, catalyzes the hydrolytic deamination of adenine to hypoxanthine. Plays an important role in the purine salvage pathway and in nitrogen catabolism. The polypeptide is Adenine deaminase (Sinorhizobium medicae (strain WSM419) (Ensifer medicae)).